The sequence spans 501 residues: Cytochrome P450 6j1 (501 aa).

Residue cysteine 444 coordinates heme.

The protein belongs to the cytochrome P450 family. Requires heme as cofactor.

The protein localises to the endoplasmic reticulum membrane. It localises to the microsome membrane. This chain is Cytochrome P450 6j1 (CYP6J1), found in Blattella germanica (German cockroach).